The primary structure comprises 108 residues: TYRO protein tyrosine kinase-binding protein (108 aa).

Residues 1 to 25 (MGRLGPSNGLLPLLLAVGGFSLVQA) form the signal peptide. Residues 26–36 (QRECSCSAVSP) lie on the Extracellular side of the membrane. A helical transmembrane segment spans residues 37–57 (GILAGIVLGDLVLTLLIALAV). Asp46 is a binding site for Ca(2+). Topologically, residues 58–108 (YSLGRLVPRTRGAVDVTRKQHIAETESAYQELQGQRSDVYSDLNTQRQYYK) are cytoplasmic. Positions 75 to 103 (RKQHIAETESAYQELQGQRSDVYSDLNTQ) constitute an ITAM domain. 2 positions are modified to phosphotyrosine: Tyr86 and Tyr97.

The protein belongs to the TYROBP family. As to quaternary structure, homodimer; disulfide-linked. Homotrimer; disulfide-linked. Homotetramer; disulfide-linked. Homotrimers and homotetramers form when low levels of partner receptors are available and is competitive with assembly with interacting receptors. They may represent alternative oligomerization states or may be intermediates in the receptor assembly process. Binding of a metal cation aids in homooligomerization through coordination of the metal ion by the subunits of the oligomer. Interacts with TREM1. Interacts with TREM2. Interacts with CLECSF5. Interacts with CD300LB and CD300C2. Interacts with CD300E. Interacts (via ITAM domain) with SYK (via SH2 domains); activates SYK mediating neutrophils and macrophages integrin-mediated activation. Interacts with KLRC2. Interacts with CD300H. Interacts with KLRD1. Interacts with SIGLEC1. In terms of processing, following ligand binding by associated receptors, tyrosine phosphorylated in the ITAM domain which leads to activation of additional tyrosine kinases and subsequent cell activation. Highly expressed in spleen, liver and thymus. Weakly expressed in lymph nodes. Expressed in peripheral blood leukocytes, granulocytes, macrophages, and monocytes. LPS does not increase expression in granulocytes.

The protein resides in the cell membrane. Its function is as follows. Adapter protein which non-covalently associates with activating receptors found on the surface of a variety of immune cells to mediate signaling and cell activation following ligand binding by the receptors. TYROBP is tyrosine-phosphorylated in the ITAM domain following ligand binding by the associated receptors which leads to activation of additional tyrosine kinases and subsequent cell activation. Also has an inhibitory role in some cells. Non-covalently associates with activating receptors of the CD300 family to mediate cell activation. Also mediates cell activation through association with activating receptors of the CD200R family. Required for neutrophil activation mediated by integrin. Required for the activation of myeloid cells mediated by the CLEC5A/MDL1 receptor. Associates with natural killer (NK) cell receptors such as the KLRD1/KLRC2 heterodimer to mediate NK cell activation. Associates with TREM1 to mediate activation of neutrophils and monocytes. Associates with TREM2 on monocyte-derived dendritic cells to mediate up-regulation of chemokine receptor CCR7 and dendritic cell maturation and survival. Association with TREM2 mediates cytokine-induced formation of multinucleated giant cells which are formed by the fusion of macrophages. Stabilizes the TREM2 C-terminal fragment (TREM2-CTF) produced by TREM2 ectodomain shedding which suppresses the release of pro-inflammatory cytokines. In microglia, required with TREM2 for phagocytosis of apoptotic neurons. Required with ITGAM/CD11B in microglia to control production of microglial superoxide ions which promote the neuronal apoptosis that occurs during brain development. Promotes pro-inflammatory responses in microglia following nerve injury which accelerates degeneration of injured neurons. Positively regulates the expression of the IRAK3/IRAK-M kinase and IL10 production by liver dendritic cells and inhibits their T cell allosimulatory ability. Negatively regulates B cell proliferation. Required for CSF1-mediated osteoclast cytoskeletal organization. Positively regulates multinucleation during osteoclast development. This Sus scrofa (Pig) protein is TYRO protein tyrosine kinase-binding protein.